Reading from the N-terminus, the 117-residue chain is Fluoride-specific ion channel FluC 1 (117 aa).

A run of 4 helical transmembrane segments spans residues 1-21 (MIHILFIMVGGGIGAVIRAWL), 35-55 (IATLIVNLVGSFLIGFVYGIA), 60-80 (LFSLFFITGVLGGLTTFSTLS), and 97-117 (FSYSILQFVIGFISCFIGYSI). Na(+) contacts are provided by Gly-71 and Thr-74.

This sequence belongs to the fluoride channel Fluc/FEX (TC 1.A.43) family.

The protein resides in the cell membrane. The enzyme catalyses fluoride(in) = fluoride(out). Na(+) is not transported, but it plays an essential structural role and its presence is essential for fluoride channel function. In terms of biological role, fluoride-specific ion channel. Important for reducing fluoride concentration in the cell, thus reducing its toxicity. The chain is Fluoride-specific ion channel FluC 1 from Staphylococcus haemolyticus (strain JCSC1435).